We begin with the raw amino-acid sequence, 232 residues long: Phosphatidylserine decarboxylase proenzyme (232 aa).

Ser-190 acts as the Schiff-base intermediate with substrate; via pyruvic acid in catalysis. Residue Ser-190 is modified to Pyruvic acid (Ser); by autocatalysis.

The protein belongs to the phosphatidylserine decarboxylase family. PSD-A subfamily. As to quaternary structure, heterodimer of a large membrane-associated beta subunit and a small pyruvoyl-containing alpha subunit. It depends on pyruvate as a cofactor. In terms of processing, is synthesized initially as an inactive proenzyme. Formation of the active enzyme involves a self-maturation process in which the active site pyruvoyl group is generated from an internal serine residue via an autocatalytic post-translational modification. Two non-identical subunits are generated from the proenzyme in this reaction, and the pyruvate is formed at the N-terminus of the alpha chain, which is derived from the carboxyl end of the proenzyme. The post-translation cleavage follows an unusual pathway, termed non-hydrolytic serinolysis, in which the side chain hydroxyl group of the serine supplies its oxygen atom to form the C-terminus of the beta chain, while the remainder of the serine residue undergoes an oxidative deamination to produce ammonia and the pyruvoyl prosthetic group on the alpha chain.

It is found in the cell membrane. It catalyses the reaction a 1,2-diacyl-sn-glycero-3-phospho-L-serine + H(+) = a 1,2-diacyl-sn-glycero-3-phosphoethanolamine + CO2. The protein operates within phospholipid metabolism; phosphatidylethanolamine biosynthesis; phosphatidylethanolamine from CDP-diacylglycerol: step 2/2. Functionally, catalyzes the formation of phosphatidylethanolamine (PtdEtn) from phosphatidylserine (PtdSer). The sequence is that of Phosphatidylserine decarboxylase proenzyme from Methylocella silvestris (strain DSM 15510 / CIP 108128 / LMG 27833 / NCIMB 13906 / BL2).